A 427-amino-acid chain; its full sequence is Thyroid hormone receptor alpha-A (427 aa).

Positions 1–11 (MENTEQEHNLP) are enriched in basic and acidic residues. The tract at residues 1–40 (MENTEQEHNLPEGDETQWPNGVKRKRKNSQCSMNSTSDKS) is disordered. Residues 1 to 56 (MENTEQEHNLPEGDETQWPNGVKRKRKNSQCSMNSTSDKSISVPGYVPSYLEKDEP) form a modulating region. Over residues 29-40 (SQCSMNSTSDKS) the composition is skewed to polar residues. NR C4-type zinc fingers lie at residues 57 to 77 (CVVCGDKATGYHYRCITCEGC) and 95 to 119 (CKYDSCCIIDKITRNQCQLCRFRKC). The nuclear receptor DNA-binding region spans 57–131 (CVVCGDKATG…VGMAMDLVLD (75 aa)). The region spanning 167 to 410 (SEWELIRMVT…PPLFLEVFED (244 aa)) is the NR LBD domain.

Belongs to the nuclear hormone receptor family. NR1 subfamily. In terms of assembly, interacts with ncoa2. As to expression, after the mid-blastula transition (MBT), expressed throughout the deep cells, which give rise to the embryo proper. In adults, isoform 2 shows highest expression in the eye and liver. Expressed in adult gonads.

It localises to the nucleus. In terms of biological role, high affinity receptor for triiodothyronine. In the absence of thyroid hormone during late blastula stage development, acts as a transcriptional repressor. Whereas in the presence of thyroid hormone, can act as an activator of transcription. In addition, represses retinoic acid (RA)-signaling during blastula and gastrula stages of development. The sequence is that of Thyroid hormone receptor alpha-A (thraa) from Danio rerio (Zebrafish).